Consider the following 302-residue polypeptide: 4-hydroxy-tetrahydrodipicolinate synthase (302 aa).

Thr-55 provides a ligand contact to pyruvate. The active-site Proton donor/acceptor is Tyr-144. Residue Lys-172 is the Schiff-base intermediate with substrate of the active site. Val-214 contacts pyruvate.

Belongs to the DapA family. As to quaternary structure, homotetramer; dimer of dimers.

It is found in the cytoplasm. It catalyses the reaction L-aspartate 4-semialdehyde + pyruvate = (2S,4S)-4-hydroxy-2,3,4,5-tetrahydrodipicolinate + H2O + H(+). It functions in the pathway amino-acid biosynthesis; L-lysine biosynthesis via DAP pathway; (S)-tetrahydrodipicolinate from L-aspartate: step 3/4. In terms of biological role, catalyzes the condensation of (S)-aspartate-beta-semialdehyde [(S)-ASA] and pyruvate to 4-hydroxy-tetrahydrodipicolinate (HTPA). This Prochlorococcus marinus (strain MIT 9303) protein is 4-hydroxy-tetrahydrodipicolinate synthase.